Consider the following 245-residue polypeptide: MAGLELLSDQGYRIDGRRAGELRKIQARMGVFAQADGSAYIEQGNTKALAVVYGPHEIRGSRSRALPDRALVNCQYSSATFSTGERKRRPHGDRKSCEMGLQLRQTFEAAILTQLHPRSQIDIYVQVLQADGGTYAACVNAATLAVMDAGIPMRDFVCACSAGFVDGTALADLSHVEEAAGGPQLALALLPASGQIALLEMDSRLHEDHLEQVLEAAAQAARGVHTLLDLVVRQHVQEASVSLGD.

The residue at position 2 (A2) is an N-acetylalanine.

The protein belongs to the RNase PH family. As to quaternary structure, component of the RNA exosome core complex (Exo-9), composed of EXOSC1, EXOSC2, EXOSC3, EXOSC4, EXOSC5, EXOSC6, EXOSC7, EXOSC8 and EXOSC9; within the complex interacts with EXOSC2, EXOSC7 and EXOSC9. The catalytically inactive RNA exosome core complex (Exo-9) associates with the catalytic subunit EXOSC10/RRP6. Exo-9 may associate with DIS3 to form the nucleolar exosome complex, or DIS3L to form the cytoplasmic exosome complex. Exo-9 is formed by a hexameric base ring consisting of the heterodimers EXOSC4-EXOSC9, EXOSC5-EXOSC8 and EXOSC6-EXOSC7, and a cap ring consisting of EXOSC1, EXOSC2 and EXOSC3. The RNA exosome complex associates with cofactors C1D/RRP47, MPHOSPH6/MPP6 and MTREX/MTR4. Interacts with DDX60. Interacts with DIS3; the interaction is direct.

It is found in the cytoplasm. It localises to the nucleus. The protein resides in the nucleolus. Its subcellular location is the nucleoplasm. Functionally, non-catalytic component of the RNA exosome complex which has 3'-&gt;5' exoribonuclease activity and participates in a multitude of cellular RNA processing and degradation events. In the nucleus, the RNA exosome complex is involved in proper maturation of stable RNA species such as rRNA, snRNA and snoRNA, in the elimination of RNA processing by-products and non-coding 'pervasive' transcripts, such as antisense RNA species and promoter-upstream transcripts (PROMPTs), and of mRNAs with processing defects, thereby limiting or excluding their export to the cytoplasm. The RNA exosome may be involved in Ig class switch recombination (CSR) and/or Ig variable region somatic hypermutation (SHM) by targeting AICDA deamination activity to transcribed dsDNA substrates. In the cytoplasm, the RNA exosome complex is involved in general mRNA turnover and specifically degrades inherently unstable mRNAs containing AU-rich elements (AREs) within their 3' untranslated regions, and in RNA surveillance pathways, preventing translation of aberrant mRNAs. It seems to be involved in degradation of histone mRNA. The catalytic inactive RNA exosome core complex of 9 subunits (Exo-9) is proposed to play a pivotal role in the binding and presentation of RNA for ribonucleolysis, and to serve as a scaffold for the association with catalytic subunits and accessory proteins or complexes. EXOSC4 binds to ARE-containing RNAs. The protein is Exosome complex component RRP41 (Exosc4) of Mus musculus (Mouse).